Reading from the N-terminus, the 431-residue chain is MKNYIEIVDVYARQILDSRCNPTVEVEVELEDGTVGVAAVPSGASTGAFEAVELRDGDKSKYLGKGVLKAVDNVNTIIADELVGMNVLDQVAIDKTMIELDGTDNKAKLGANAMLGVSLACAKAAANSLGMSLYQYIGGVNAKVLPVPMMNIINGGKHADNNVDLQEFMIMPAGAPSFSEALRMCSEVYHALKSTLKSQGYDTGVGDEGGFAPNLKSNEEAIVVIIEAIKEAGYTPGKDIFIALDPASSEIFEDGKYNLAGEGRVLTPEEMANYYVELAEKYPIISIEDGMAEEDWDGWKILTEKIGNKVQLVGDDLFVTNTERLSKGIKLGVANSILIKLNQIGTLTETLNAIEMAERAGYTAVVSHRSGETEDTTIADLVVAVNAGQIKTGAPARSERVAKYNQLLRIEEELNDMGEYRGLKAFYNINK.

(2R)-2-phosphoglycerate is bound at residue Gln-166. Residue Glu-208 is the Proton donor of the active site. Mg(2+) is bound by residues Asp-245, Glu-288, and Asp-315. (2R)-2-phosphoglycerate-binding residues include Lys-340, Arg-369, Ser-370, and Lys-391. Residue Lys-340 is the Proton acceptor of the active site.

Belongs to the enolase family. Mg(2+) is required as a cofactor.

Its subcellular location is the cytoplasm. It is found in the secreted. The protein resides in the cell surface. It carries out the reaction (2R)-2-phosphoglycerate = phosphoenolpyruvate + H2O. It participates in carbohydrate degradation; glycolysis; pyruvate from D-glyceraldehyde 3-phosphate: step 4/5. Its function is as follows. Catalyzes the reversible conversion of 2-phosphoglycerate (2-PG) into phosphoenolpyruvate (PEP). It is essential for the degradation of carbohydrates via glycolysis. In Clostridium botulinum (strain Okra / Type B1), this protein is Enolase.